Reading from the N-terminus, the 213-residue chain is Large ribosomal subunit protein uL1 (213 aa).

This sequence belongs to the universal ribosomal protein uL1 family. Part of the 50S ribosomal subunit.

In terms of biological role, probably involved in E site tRNA release. Binds directly to 23S rRNA. Protein L1 is also a translational repressor protein, it controls the translation of the L1 operon by binding to its mRNA. Thus it also controls transcription of L10 and L12 by translational coupling. Unlike the case in E.coli, where the site is in the untranslated mRNA leader, this site is within the L1 protein's structural gene. The chain is Large ribosomal subunit protein uL1 from Methanococcus vannielii (strain ATCC 35089 / DSM 1224 / JCM 13029 / OCM 148 / SB).